The sequence spans 300 residues: Ribonuclease Z (300 aa).

The Zn(2+) site is built by histidine 63, histidine 65, aspartate 67, histidine 68, histidine 140, aspartate 207, and histidine 265. Residue aspartate 67 is the Proton acceptor of the active site.

It belongs to the RNase Z family. As to quaternary structure, homodimer. It depends on Zn(2+) as a cofactor.

The catalysed reaction is Endonucleolytic cleavage of RNA, removing extra 3' nucleotides from tRNA precursor, generating 3' termini of tRNAs. A 3'-hydroxy group is left at the tRNA terminus and a 5'-phosphoryl group is left at the trailer molecule.. Its function is as follows. Zinc phosphodiesterase, which displays some tRNA 3'-processing endonuclease activity. Probably involved in tRNA maturation, by removing a 3'-trailer from precursor tRNA. This is Ribonuclease Z from Ignicoccus hospitalis (strain KIN4/I / DSM 18386 / JCM 14125).